A 220-amino-acid chain; its full sequence is Chloramphenicol acetyltransferase (220 aa).

H187 functions as the Proton acceptor in the catalytic mechanism.

It belongs to the chloramphenicol acetyltransferase family. In terms of assembly, homotrimer.

It carries out the reaction chloramphenicol + acetyl-CoA = chloramphenicol 3-acetate + CoA. Its function is as follows. This enzyme is an effector of chloramphenicol resistance in bacteria. In Bacillus pumilus (Bacillus mesentericus), this protein is Chloramphenicol acetyltransferase (cat86).